Here is a 124-residue protein sequence, read N- to C-terminus: Large ribosomal subunit protein bL19 (124 aa).

It belongs to the bacterial ribosomal protein bL19 family.

This protein is located at the 30S-50S ribosomal subunit interface and may play a role in the structure and function of the aminoacyl-tRNA binding site. This chain is Large ribosomal subunit protein bL19, found in Acidiphilium cryptum (strain JF-5).